We begin with the raw amino-acid sequence, 207 residues long: Ras-related protein Rab-7a (207 aa).

Thr2 carries the post-translational modification N-acetylthreonine. Ser17, Gly18, Val19, Gly20, Lys21, Thr22, Ser23, Ser34, Asn35, Tyr37, and Thr40 together coordinate GTP. Thr22 contributes to the Mg(2+) binding site. Positions Tyr28–Ile41 match the Switch 1 motif. Mg(2+) is bound by residues Thr40 and Asp63. Gly66 is a binding site for GTP. Residues Gln67–Asp82 carry the Switch 2 motif. Ser72 is modified (phosphoserine). GTP contacts are provided by Asn125, Lys126, Asp128, Ala156, and Lys157. Residues Lys191 and Lys194 each participate in a glycyl lysine isopeptide (Lys-Gly) (interchain with G-Cter in ubiquitin) cross-link. 2 S-geranylgeranyl cysteine lipidation sites follow: Cys205 and Cys207. Cys207 carries the post-translational modification Cysteine methyl ester.

This sequence belongs to the small GTPase superfamily. Rab family. As to quaternary structure, interacts with NTRK1/TRKA. Interacts with RILP. Interacts with PSMA7. Interacts with RNF115. Interacts with FYCO1. Interacts with the PIK3C3/VPS34-PIK3R4 complex. The GTP-bound form interacts with OSBPL1A. The GTP-bound form interacts with RAC1. Interacts with CLN3. Interacts with CHM, the substrate-binding subunit of the Rab geranylgeranyltransferase complex. Interacts with C9orf72. Does not interact with HPS4 and the BLOC-3 complex (heterodimer of HPS1 and HPS4). Interacts with CLN5. Interacts with PLEKHM1 (via N- and C-terminus). Interacts with PRPH; the interaction is direct. Interacts with VPS13A. The GDP-bound form interacts with RIMOC1. Interacts with the MON1A-CCZ1B complex and this interaction is enhanced in the presence of RIMOC1. Interacts with VPS39 and VPS41. Forms a ternary complex with LAMP2 and RUFY4; the interaction with LAMP2 is mediated by RUFY4 (via RUN and coiled coil domains). Mg(2+) is required as a cofactor. Deubiquitination at Lys-191 and Lys-194 by USP32. Post-translationally, phosphorylated at Ser-72 by LRRK1; phosphorylation is dependent on protein kinase C (PKC) activation of LRRK1. In terms of processing, prenylated. Prenylation is required for association with cellular membranes.

It is found in the cytoplasmic vesicle. Its subcellular location is the phagosome membrane. The protein localises to the late endosome membrane. The protein resides in the lysosome membrane. It localises to the melanosome membrane. It is found in the autophagosome membrane. Its subcellular location is the lipid droplet. The protein localises to the endosome membrane. The protein resides in the mitochondrion membrane. The enzyme catalyses GTP + H2O = GDP + phosphate + H(+). Regulated by guanine nucleotide exchange factors (GEFs) which promote the exchange of bound GDP for free GTP. Regulated by GTPase activating proteins (GAPs) which increase the GTP hydrolysis activity. Inhibited by GDP dissociation inhibitors (GDIs). Its function is as follows. The small GTPases Rab are key regulators of intracellular membrane trafficking, from the formation of transport vesicles to their fusion with membranes. Rabs cycle between an inactive GDP-bound form and an active GTP-bound form that is able to recruit to membranes different sets of downstream effectors directly responsible for vesicle formation, movement, tethering and fusion. In its active state, RAB7A binds to a variety of effector proteins playing a key role in the regulation of endo-lysosomal trafficking. Governs early-to-late endosomal maturation, microtubule minus-end as well as plus-end directed endosomal migration and positioning, and endosome-lysosome transport through different protein-protein interaction cascades. Also plays a central role in growth-factor-mediated cell signaling, nutrient-transporter-mediated nutrient uptake, neurotrophin transport in the axons of neurons and lipid metabolism. Also involved in regulation of some specialized endosomal membrane trafficking, such as maturation of melanosomes, pathogen-induced phagosomes (or vacuoles) and autophagosomes. Plays a role in the maturation and acidification of phagosomes that engulf pathogens, such as S.aureus and Mycobacteria. Plays a role in the fusion of phagosomes with lysosomes. In concert with RAC1, plays a role in regulating the formation of RBs (ruffled borders) in osteoclasts. Controls the endosomal trafficking and neurite outgrowth signaling of NTRK1/TRKA. Regulates the endocytic trafficking of the EGF-EGFR complex by regulating its lysosomal degradation. Involved in the ADRB2-stimulated lipolysis through lipophagy, a cytosolic lipase-independent autophagic pathway. Required for the exosomal release of SDCBP, CD63 and syndecan. Required for vesicular trafficking and cell surface expression of ACE2. May play a role in PRPH neuronal intermediate filament assembly. This Bos taurus (Bovine) protein is Ras-related protein Rab-7a (RAB7A).